A 414-amino-acid chain; its full sequence is TAR DNA-binding protein 43 (414 aa).

Residues Lys-79, Lys-84, Lys-95, Lys-102, and Lys-181 each participate in a glycyl lysine isopeptide (Lys-Gly) (interchain with G-Cter in SUMO2) cross-link. RRM domains follow at residues 104-200 (SDLI…RCTE) and 191-262 (RKVF…NAEP). Phosphoserine is present on Ser-183. The interval 216-414 (DVMDVFIPKP…MDSKSSGWGM (199 aa)) is interaction with UBQLN2. Positions 261–274 (EPKHNSNRQLERSG) are enriched in basic and acidic residues. Disordered regions lie at residues 261–303 (EPKH…GNNQ) and 341–373 (ASQQ…GNNS). Lys-263 participates in a covalent cross-link: Glycyl lysine isopeptide (Lys-Gly) (interchain with G-Cter in SUMO2). Positions 275–303 (RFGGNPGGFGNQGGFGNSRGGGAGLGNNQ) are enriched in gly residues. Ser-292 is modified (phosphoserine). The residue at position 293 (Arg-293) is an Omega-N-methylarginine. Residues 342–358 (SQQNQSGPSGNNQNQGN) are compositionally biased toward low complexity.

As to quaternary structure, monomer and component of the SFPQ-NONO complex, which is probably a heterotetramer of two 52 kDa (NONO) and two 100 kDa (SFPQ) subunits. NONO is a component of spliceosome and U5.4/6 snRNP complexes. Interacts with CPNE4 (via VWFA domain). Forms heterodimers with PSPC1; this involves formation of a coiled coil domain by helices from both proteins. Part of complex consisting of SFPQ, NONO and MATR3. Part of a complex consisting of SFPQ, NONO and NR5A1. Part of a complex consisting of SFPQ, NONO and TOP1. Interacts with SPI1. Interacts with RNF43. Interacts with PER1 and PER2. Part of the HDP-RNP complex composed of at least HEXIM1, PRKDC, XRCC5, XRCC6, paraspeckle proteins (SFPQ, NONO, PSPC1, RBM14, and MATR3) and NEAT1 RNA. Interacts (via second RRM domain) with WASL; the interaction is direct. Component of a multiprotein complex with WASL and SFPQ. Interacts with ERCC6. Interacts (via DNA-binding domain) with TET1. Post-translationally, hyperphosphorylated. Ubiquitinated.

Its subcellular location is the nucleus. The protein resides in the nucleolus. It is found in the nucleus speckle. It localises to the chromosome. The protein localises to the mitochondrion. In terms of biological role, DNA- and RNA binding protein, involved in several nuclear processes. Binds the conventional octamer sequence in double-stranded DNA. Also binds single-stranded DNA and RNA at a site independent of the duplex site. Involved in pre-mRNA splicing, probably as a heterodimer with SFPQ. Interacts with U5 snRNA, probably by binding to a purine-rich sequence located on the 3' side of U5 snRNA stem 1b. Together with PSPC1, required for the formation of nuclear paraspeckles. The SFPQ-NONO heteromer associated with MATR3 may play a role in nuclear retention of defective RNAs. The SFPQ-NONO heteromer may be involved in DNA unwinding by modulating the function of topoisomerase I/TOP1. The SFPQ-NONO heteromer may be involved in DNA non-homologous end joining (NHEJ) required for double-strand break repair and V(D)J recombination and may stabilize paired DNA ends. In vitro, the complex strongly stimulates DNA end joining, binds directly to the DNA substrates and cooperates with the Ku70/G22P1-Ku80/XRCC5 (Ku) dimer to establish a functional preligation complex. NONO is involved in transcriptional regulation. The SFPQ-NONO-NR5A1 complex binds to the CYP17 promoter and regulates basal and cAMP-dependent transcriptional activity. NONO binds to an enhancer element in long terminal repeats of endogenous intracisternal A particles (IAPs) and activates transcription. Regulates the circadian clock by repressing the transcriptional activator activity of the CLOCK-BMAL1 heterodimer. Important for the functional organization of GABAergic synapses. Plays a specific and important role in the regulation of synaptic RNAs and GPHN/gephyrin scaffold structure, through the regulation of GABRA2 transcript. Plays a key role during neuronal differentiation by recruiting TET1 to genomic loci and thereby regulating 5-hydroxymethylcytosine levels. Plays a role in the regulation of DNA virus-mediated innate immune response by assembling into the HDP-RNP complex, a complex that serves as a platform for IRF3 phosphorylation and subsequent innate immune response activation through the cGAS-STING pathway. In Pongo abelii (Sumatran orangutan), this protein is TAR DNA-binding protein 43 (TARDBP).